A 110-amino-acid polypeptide reads, in one-letter code: Snake venom vascular endothelial growth factor toxin (110 aa).

Pyrrolidone carboxylic acid is present on glutamine 1. Intrachain disulfides connect cysteine 14-cysteine 56, cysteine 45-cysteine 91, and cysteine 49-cysteine 93.

Belongs to the PDGF/VEGF growth factor family. Snake venom VEGF subfamily. As to quaternary structure, homodimer; disulfide-linked. In terms of tissue distribution, expressed by the venom gland.

Its subcellular location is the secreted. Snake venom VEGFs that may contribute to venom dispersion and prey subjugation by inducing vascular permeability and hypotension. This protein potently stimulates dermal human microvascular endothelial cell (dHMVEC) proliferation in a VEGFR-2 dependent manner. This stimulatory effect is correlated with activation of the MAPK Erk1/2 signaling pathway. It also appears to be a chemoattractant for migration of these cells and stimulates their radial migration in a collagen gel. In vivo, it induces angiogenesis in a Japanese quail assay. This pro-angiogenic effect may also be related to its interaction with VEGFR-2. In addition, it may induce an increase in capillary permeability after intradermal injection, as well as a drastic hypotensive effect after intravenous injection. The hypotension is mediated by nitric oxide (NO), which is produced by VEGF-activated endothelium NO synthase. The protein is Snake venom vascular endothelial growth factor toxin of Daboia palaestinae (Palestine viper).